A 482-amino-acid chain; its full sequence is Matrix metalloproteinase-20 (482 aa).

The signal sequence occupies residues 1–21 (MKVLPASGLAVLVTALKFATA). Positions 22–106 (DPNLLAATPR…PRCGVPDVAN (85 aa)) are excised as a propeptide. A Cysteine switch motif is present at residues 97–104 (PRCGVPDV). Position 99 (Cys-99) interacts with Zn(2+). Ca(2+) is bound by residues Glu-163, Ala-164, and Asp-165. Zn(2+)-binding residues include His-175 and Asp-177. Ca(2+) is bound by residues Asp-182, Gly-183, Arg-185, and Thr-187. His-190 is a Zn(2+) binding site. Residues Glu-196, Gly-197, Gly-199, and Asp-201 each contribute to the Ca(2+) site. His-203 is a binding site for Zn(2+). 2 residues coordinate Ca(2+): Asp-205 and Glu-208. His-225 is a binding site for Zn(2+). Residue Glu-226 is part of the active site. Residues His-229 and His-235 each coordinate Zn(2+). Hemopexin repeat units follow at residues 292–342 (PDLC…FPQL), 343–388 (MSNV…GFPR), 390–438 (VQRI…FSGV), and 439–482 (SGHI…WIGC). Cysteines 295 and 482 form a disulfide.

Belongs to the peptidase M10A family. The cofactor is Zn(2+). Ca(2+) is required as a cofactor. Autoactivates at least at the 106-Asn-|-Tyr-107 site. Expressed in the enamel organ.

Its subcellular location is the secreted. It localises to the extracellular space. The protein resides in the extracellular matrix. In terms of biological role, degrades amelogenin, the major protein component of the enamel matrix and two of the macromolecules characterizing the cartilage extracellular matrix: aggrecan and the cartilage oligomeric matrix protein (COMP). May play a central role in tooth enamel formation. Cleaves aggrecan at the '360-Asn-|-Phe-361' site. This Mus musculus (Mouse) protein is Matrix metalloproteinase-20 (Mmp20).